Consider the following 367-residue polypeptide: UDP-N-acetylglucosamine--N-acetylmuramyl-(pentapeptide) pyrophosphoryl-undecaprenol N-acetylglucosamine transferase (367 aa).

UDP-N-acetyl-alpha-D-glucosamine is bound by residues 15–17 (TGG), asparagine 127, arginine 163, serine 191, isoleucine 249, and glutamine 294.

It belongs to the glycosyltransferase 28 family. MurG subfamily.

The protein resides in the cell inner membrane. It catalyses the reaction di-trans,octa-cis-undecaprenyl diphospho-N-acetyl-alpha-D-muramoyl-L-alanyl-D-glutamyl-meso-2,6-diaminopimeloyl-D-alanyl-D-alanine + UDP-N-acetyl-alpha-D-glucosamine = di-trans,octa-cis-undecaprenyl diphospho-[N-acetyl-alpha-D-glucosaminyl-(1-&gt;4)]-N-acetyl-alpha-D-muramoyl-L-alanyl-D-glutamyl-meso-2,6-diaminopimeloyl-D-alanyl-D-alanine + UDP + H(+). It functions in the pathway cell wall biogenesis; peptidoglycan biosynthesis. Its function is as follows. Cell wall formation. Catalyzes the transfer of a GlcNAc subunit on undecaprenyl-pyrophosphoryl-MurNAc-pentapeptide (lipid intermediate I) to form undecaprenyl-pyrophosphoryl-MurNAc-(pentapeptide)GlcNAc (lipid intermediate II). The protein is UDP-N-acetylglucosamine--N-acetylmuramyl-(pentapeptide) pyrophosphoryl-undecaprenol N-acetylglucosamine transferase of Burkholderia ambifaria (strain MC40-6).